Consider the following 695-residue polypeptide: Elongation factor G 1 (695 aa).

The tr-type G domain maps to 5–280 (ARYRNIGIFA…AVVDYLPSPT (276 aa)). GTP contacts are provided by residues 14-21 (AHVDAGKT), 78-82 (DTPGH), and 132-135 (NKLD).

It belongs to the TRAFAC class translation factor GTPase superfamily. Classic translation factor GTPase family. EF-G/EF-2 subfamily.

The protein localises to the cytoplasm. Its function is as follows. Catalyzes the GTP-dependent ribosomal translocation step during translation elongation. During this step, the ribosome changes from the pre-translocational (PRE) to the post-translocational (POST) state as the newly formed A-site-bound peptidyl-tRNA and P-site-bound deacylated tRNA move to the P and E sites, respectively. Catalyzes the coordinated movement of the two tRNA molecules, the mRNA and conformational changes in the ribosome. In Pseudoalteromonas atlantica (strain T6c / ATCC BAA-1087), this protein is Elongation factor G 1.